Here is a 33-residue protein sequence, read N- to C-terminus: Photosystem II reaction center protein Psb30 (33 aa).

The helical transmembrane segment at 5–25 (VIAQLIALALIVGSGPLVIAL) threads the bilayer.

This sequence belongs to the Psb30/Ycf12 family. In terms of assembly, PSII is composed of 1 copy each of membrane proteins PsbA, PsbB, PsbC, PsbD, PsbE, PsbF, PsbH, PsbI, PsbJ, PsbK, PsbL, PsbM, PsbT, PsbX, PsbY, PsbZ, Psb30/Ycf12, peripheral proteins of the oxygen-evolving complex and a large number of cofactors. It forms dimeric complexes.

The protein localises to the plastid. The protein resides in the chloroplast thylakoid membrane. In terms of biological role, a core subunit of photosystem II (PSII), probably helps stabilize the reaction center. The protein is Photosystem II reaction center protein Psb30 of Physcomitrium patens (Spreading-leaved earth moss).